The sequence spans 433 residues: Amino-acid acetyltransferase (433 aa).

Residues 287–426 (ELVREAAIED…ASLYNYQRNS (140 aa)) form the N-acetyltransferase domain.

Belongs to the acetyltransferase family. ArgA subfamily.

It is found in the cytoplasm. The enzyme catalyses L-glutamate + acetyl-CoA = N-acetyl-L-glutamate + CoA + H(+). The protein operates within amino-acid biosynthesis; L-arginine biosynthesis; N(2)-acetyl-L-ornithine from L-glutamate: step 1/4. In Pseudomonas fluorescens (strain SBW25), this protein is Amino-acid acetyltransferase.